A 404-amino-acid polypeptide reads, in one-letter code: Serine/threonine transporter SstT (404 aa).

9 consecutive transmembrane segments (helical) span residues 12–32 (GGNL…LALV), 53–73 (AIAP…KEVG), 81–101 (ILVM…VLSF), 140–160 (ALAN…GIAL), 177–197 (AVSF…FGLV), 216–236 (LGVL…LIVF), 287–307 (VAIP…VTVL), 329–349 (IVAS…LLLI), and 356–376 (FNIP…IGVI).

The protein belongs to the dicarboxylate/amino acid:cation symporter (DAACS) (TC 2.A.23) family.

It localises to the cell inner membrane. The enzyme catalyses L-serine(in) + Na(+)(in) = L-serine(out) + Na(+)(out). The catalysed reaction is L-threonine(in) + Na(+)(in) = L-threonine(out) + Na(+)(out). Its function is as follows. Involved in the import of serine and threonine into the cell, with the concomitant import of sodium (symport system). This chain is Serine/threonine transporter SstT, found in Actinobacillus pleuropneumoniae serotype 7 (strain AP76).